Here is a 342-residue protein sequence, read N- to C-terminus: Foldase protein PrsA (342 aa).

A signal peptide spans 1-22; it reads MVSVKKIVASALVGVLMFSAVG. Cys23 carries the N-palmitoyl cysteine lipid modification. Residue Cys23 is the site of S-diacylglycerol cysteine attachment. The region spanning 189 to 284 is the PpiC domain; it reads DSGVLTKHLL…FGYHIIQAGA (96 aa).

The protein belongs to the PrsA family.

It is found in the cell membrane. The catalysed reaction is [protein]-peptidylproline (omega=180) = [protein]-peptidylproline (omega=0). Functionally, plays a major role in protein secretion by helping the post-translocational extracellular folding of several secreted proteins. The protein is Foldase protein PrsA of Clostridium perfringens (strain ATCC 13124 / DSM 756 / JCM 1290 / NCIMB 6125 / NCTC 8237 / Type A).